A 175-amino-acid polypeptide reads, in one-letter code: Co-chaperone protein HscB homolog (175 aa).

The 73-residue stretch at 2–74 folds into the J domain; sequence NYFQLFNIEV…LQRAEYILVQ (73 aa).

This sequence belongs to the HscB family. In terms of assembly, interacts with HscA and stimulates its ATPase activity.

Its function is as follows. Co-chaperone involved in the maturation of iron-sulfur cluster-containing proteins. Seems to help targeting proteins to be folded toward HscA. This is Co-chaperone protein HscB homolog from Colwellia psychrerythraea (strain 34H / ATCC BAA-681) (Vibrio psychroerythus).